Reading from the N-terminus, the 255-residue chain is Thiazole synthase (255 aa).

Lys-96 (schiff-base intermediate with DXP) is an active-site residue. Residues Gly-157, 183-184 (AG), and 205-206 (NS) each bind 1-deoxy-D-xylulose 5-phosphate.

It belongs to the ThiG family. In terms of assembly, homotetramer. Forms heterodimers with either ThiH or ThiS.

It localises to the cytoplasm. The enzyme catalyses [ThiS sulfur-carrier protein]-C-terminal-Gly-aminoethanethioate + 2-iminoacetate + 1-deoxy-D-xylulose 5-phosphate = [ThiS sulfur-carrier protein]-C-terminal Gly-Gly + 2-[(2R,5Z)-2-carboxy-4-methylthiazol-5(2H)-ylidene]ethyl phosphate + 2 H2O + H(+). Its pathway is cofactor biosynthesis; thiamine diphosphate biosynthesis. Its function is as follows. Catalyzes the rearrangement of 1-deoxy-D-xylulose 5-phosphate (DXP) to produce the thiazole phosphate moiety of thiamine. Sulfur is provided by the thiocarboxylate moiety of the carrier protein ThiS. In vitro, sulfur can be provided by H(2)S. This Staphylococcus carnosus (strain TM300) protein is Thiazole synthase.